The chain runs to 375 residues: DNA replication and repair protein RecF (375 aa).

30-37 provides a ligand contact to ATP; sequence GENAQGKT.

Belongs to the RecF family.

It is found in the cytoplasm. Its function is as follows. The RecF protein is involved in DNA metabolism; it is required for DNA replication and normal SOS inducibility. RecF binds preferentially to single-stranded, linear DNA. It also seems to bind ATP. This chain is DNA replication and repair protein RecF, found in Bacillus mycoides (strain KBAB4) (Bacillus weihenstephanensis).